The primary structure comprises 104 residues: Large ribosomal subunit protein bL21 (104 aa).

It belongs to the bacterial ribosomal protein bL21 family. Part of the 50S ribosomal subunit. Contacts protein L20.

In terms of biological role, this protein binds to 23S rRNA in the presence of protein L20. This chain is Large ribosomal subunit protein bL21, found in Endomicrobium trichonymphae.